The primary structure comprises 172 residues: Cytidylate kinase (172 aa).

An ATP-binding site is contributed by 8 to 16 (GPPGSGKST).

Belongs to the cytidylate kinase family. Type 2 subfamily.

It is found in the cytoplasm. It carries out the reaction CMP + ATP = CDP + ADP. The catalysed reaction is dCMP + ATP = dCDP + ADP. The chain is Cytidylate kinase from Ignicoccus hospitalis (strain KIN4/I / DSM 18386 / JCM 14125).